A 379-amino-acid chain; its full sequence is Putative cyclic ADP-D-ribose synthase TIR2 (379 aa).

Positions 254–379 constitute a TIR domain; the sequence is KVYDVFISHS…TISWTTGLVK (126 aa). Glu335 is an active-site residue.

Homodimer.

It is found in the cytoplasm. Activated upon phage infection. Functionally, one of 2 TIR-like protein components of the Thoeris antiviral defense system, composed of ThsA, TIR1 (thsB1) and TIR2 (thsB2). Phage infection activates this protein; by 70 minutes post-infection with phage SPO1, TIR2 generates a signal molecule that in turn activates the NAD(+) hydrolase activity of ThsA (tested with B.cereus). The signal is similar to cyclic ADP-D-ribose, but how it differs is unknown. Expression of Thoeris in B.subtilis (strain BEST7003) confers resistance to phages phi29, phi3T, SPBeta, SBSphi11, SBSphi13, SBSphiJ, SPO1 and SPR but not SBSphiC. The TIR paralogs confer resistance to different phages; this subunit confers resistance to phi3T, SPBeta, SBSphi13, SBSphiJ, SPO1 and SPR but not phi29, SBSphi11 or SBSphiC. There is overlap in the phage range for this system, both TIR1 and TIR2 are activated by SBSphi13, SBSphiJ, SPO1 and SPR. Probably hydrolyzes NAD(+) to make a cyclic ADP-D-ribose (cADPR) signaling molecule; might make 3'cADPR. This chain is Putative cyclic ADP-D-ribose synthase TIR2, found in Cytobacillus dafuensis (Bacillus dafuensis).